We begin with the raw amino-acid sequence, 131 residues long: Small ribosomal subunit protein eS17A (131 aa).

It belongs to the eukaryotic ribosomal protein eS17 family. As to quaternary structure, component of the small ribosomal subunit (SSU). Mature yeast ribosomes consist of a small (40S) and a large (60S) subunit. The 40S small subunit contains 1 molecule of ribosomal RNA (18S rRNA) and at least 33 different proteins. The large 60S subunit contains 3 rRNA molecules (25S, 5.8S and 5S rRNA) and at least 46 different proteins.

The protein localises to the cytoplasm. Its function is as follows. Component of the ribosome, a large ribonucleoprotein complex responsible for the synthesis of proteins in the cell. The small ribosomal subunit (SSU) binds messenger RNAs (mRNAs) and translates the encoded message by selecting cognate aminoacyl-transfer RNA (tRNA) molecules. The large subunit (LSU) contains the ribosomal catalytic site termed the peptidyl transferase center (PTC), which catalyzes the formation of peptide bonds, thereby polymerizing the amino acids delivered by tRNAs into a polypeptide chain. The nascent polypeptides leave the ribosome through a tunnel in the LSU and interact with protein factors that function in enzymatic processing, targeting, and the membrane insertion of nascent chains at the exit of the ribosomal tunnel. The polypeptide is Small ribosomal subunit protein eS17A (rps1701) (Schizosaccharomyces pombe (strain 972 / ATCC 24843) (Fission yeast)).